Reading from the N-terminus, the 502-residue chain is Protein krueppel (502 aa).

Disordered regions lie at residues 115-164 and 178-202; these read PPQG…KLSV and DMYHTSGGPISPPSSGSSPNSTHDG. 2 stretches are compositionally biased toward low complexity: residues 119–136 and 183–198; these read THLHSPPASPHSPLSTPL and SGGPISPPSSGSSPNS. 5 C2H2-type zinc fingers span residues 222 to 244, 250 to 272, 278 to 300, 306 to 328, and 334 to 354; these read FTCKICSRSFGYKHVLQNHERTH, FECPECHKRFTRDHHLKTHMRLH, YHCSHCDRQFVQVANLRRHLRVH, YTCEICDGKFSDSNQLKSHMLVH, and FECERCHMKFRRRHHLMNHKC. Disordered regions lie at residues 399-427 and 445-502; these read NESVDMEKATPEDDGPLDLSEDGASSVDG and RLPP…HQQH. The segment covering 410 to 419 has biased composition (acidic residues); sequence EDDGPLDLSE. A phosphoserine mark is found at Ser-468, Ser-471, and Ser-477. The segment covering 482 to 491 has biased composition (acidic residues); that stretch reads DDIDLYDLDD.

This sequence belongs to the krueppel C2H2-type zinc-finger protein family.

The protein resides in the nucleus. Its function is as follows. Krueppel is a gap class segmentation protein. It is involved in the segmentation of the embryo and in the differentiation of the Malpighian tubules. The chain is Protein krueppel (Kr) from Drosophila melanogaster (Fruit fly).